Consider the following 156-residue polypeptide: Probable cyclic pyranopterin monophosphate synthase (156 aa).

Substrate-binding positions include 74-76 (LCH) and 110-111 (ME). The active site involves Asp125.

This sequence belongs to the MoaC family. In terms of assembly, homohexamer; trimer of dimers.

The enzyme catalyses (8S)-3',8-cyclo-7,8-dihydroguanosine 5'-triphosphate = cyclic pyranopterin phosphate + diphosphate. Its pathway is cofactor biosynthesis; molybdopterin biosynthesis. Catalyzes the conversion of (8S)-3',8-cyclo-7,8-dihydroguanosine 5'-triphosphate to cyclic pyranopterin monophosphate (cPMP). This chain is Probable cyclic pyranopterin monophosphate synthase, found in Thermococcus onnurineus (strain NA1).